The chain runs to 500 residues: Cytochrome P450 2D4 (500 aa).

A heme-binding site is contributed by C446.

Belongs to the cytochrome P450 family. The cofactor is heme. Brain.

Its subcellular location is the endoplasmic reticulum membrane. The protein localises to the microsome membrane. It catalyses the reaction an organic molecule + reduced [NADPH--hemoprotein reductase] + O2 = an alcohol + oxidized [NADPH--hemoprotein reductase] + H2O + H(+). Cytochromes P450 are a group of heme-thiolate monooxygenases. In liver microsomes, this enzyme is involved in an NADPH-dependent electron transport pathway. It oxidizes a variety of structurally unrelated compounds, including steroids, fatty acids, and xenobiotics. The chain is Cytochrome P450 2D4 (Cyp2d4) from Rattus norvegicus (Rat).